A 37-amino-acid chain; its full sequence is Large ribosomal subunit protein bL36 (37 aa).

The protein belongs to the bacterial ribosomal protein bL36 family.

The chain is Large ribosomal subunit protein bL36 from Endomicrobium trichonymphae.